The following is a 507-amino-acid chain: Glutamate--tRNA ligase (507 aa).

The short motif at 14–24 is the 'HIGH' region element; it reads PSPTGPLHIGG. The 'KMSKS' region signature appears at 262–266; that stretch reads KLSKR. Residue Lys265 participates in ATP binding.

It belongs to the class-I aminoacyl-tRNA synthetase family. Glutamate--tRNA ligase type 1 subfamily. As to quaternary structure, monomer.

The protein localises to the cytoplasm. It carries out the reaction tRNA(Glu) + L-glutamate + ATP = L-glutamyl-tRNA(Glu) + AMP + diphosphate. Its function is as follows. Catalyzes the attachment of glutamate to tRNA(Glu) in a two-step reaction: glutamate is first activated by ATP to form Glu-AMP and then transferred to the acceptor end of tRNA(Glu). This chain is Glutamate--tRNA ligase, found in Porphyromonas gingivalis (strain ATCC 33277 / DSM 20709 / CIP 103683 / JCM 12257 / NCTC 11834 / 2561).